Reading from the N-terminus, the 317-residue chain is Ribose-phosphate pyrophosphokinase (317 aa).

ATP contacts are provided by residues 43–45 and 102–103; these read DGE and RQ. Positions 136 and 175 each coordinate Mg(2+). The active site involves Lys198. Residues Arg200, Asp224, and 228–232 contribute to the D-ribose 5-phosphate site; that span reads DTAGT.

The protein belongs to the ribose-phosphate pyrophosphokinase family. Class I subfamily. Homohexamer. The cofactor is Mg(2+).

It is found in the cytoplasm. The enzyme catalyses D-ribose 5-phosphate + ATP = 5-phospho-alpha-D-ribose 1-diphosphate + AMP + H(+). It functions in the pathway metabolic intermediate biosynthesis; 5-phospho-alpha-D-ribose 1-diphosphate biosynthesis; 5-phospho-alpha-D-ribose 1-diphosphate from D-ribose 5-phosphate (route I): step 1/1. Involved in the biosynthesis of the central metabolite phospho-alpha-D-ribosyl-1-pyrophosphate (PRPP) via the transfer of pyrophosphoryl group from ATP to 1-hydroxyl of ribose-5-phosphate (Rib-5-P). This is Ribose-phosphate pyrophosphokinase from Oceanobacillus iheyensis (strain DSM 14371 / CIP 107618 / JCM 11309 / KCTC 3954 / HTE831).